Here is a 408-residue protein sequence, read N- to C-terminus: LL-diaminopimelate aminotransferase (408 aa).

2 residues coordinate substrate: Y15 and G42. Pyridoxal 5'-phosphate-binding positions include Y72, 108 to 109, Y132, N187, Y218, and 246 to 248; these read SK and SFS. 3 residues coordinate substrate: K109, Y132, and N187. K249 is modified (N6-(pyridoxal phosphate)lysine). R257 and N292 together coordinate pyridoxal 5'-phosphate. N292 and R388 together coordinate substrate.

The protein belongs to the class-I pyridoxal-phosphate-dependent aminotransferase family. LL-diaminopimelate aminotransferase subfamily. Homodimer. It depends on pyridoxal 5'-phosphate as a cofactor.

The enzyme catalyses (2S,6S)-2,6-diaminopimelate + 2-oxoglutarate = (S)-2,3,4,5-tetrahydrodipicolinate + L-glutamate + H2O + H(+). It participates in amino-acid biosynthesis; L-lysine biosynthesis via DAP pathway; LL-2,6-diaminopimelate from (S)-tetrahydrodipicolinate (aminotransferase route): step 1/1. Its function is as follows. Involved in the synthesis of meso-diaminopimelate (m-DAP or DL-DAP), required for both lysine and peptidoglycan biosynthesis. Catalyzes the direct conversion of tetrahydrodipicolinate to LL-diaminopimelate. The protein is LL-diaminopimelate aminotransferase of Synechococcus sp. (strain CC9902).